A 360-amino-acid chain; its full sequence is UDP-N-acetylglucosamine--N-acetylmuramyl-(pentapeptide) pyrophosphoryl-undecaprenol N-acetylglucosamine transferase (360 aa).

UDP-N-acetyl-alpha-D-glucosamine-binding positions include 13–15 (TGG), arginine 164, serine 192, and glutamine 293.

Belongs to the glycosyltransferase 28 family. MurG subfamily.

Its subcellular location is the cell inner membrane. It catalyses the reaction di-trans,octa-cis-undecaprenyl diphospho-N-acetyl-alpha-D-muramoyl-L-alanyl-D-glutamyl-meso-2,6-diaminopimeloyl-D-alanyl-D-alanine + UDP-N-acetyl-alpha-D-glucosamine = di-trans,octa-cis-undecaprenyl diphospho-[N-acetyl-alpha-D-glucosaminyl-(1-&gt;4)]-N-acetyl-alpha-D-muramoyl-L-alanyl-D-glutamyl-meso-2,6-diaminopimeloyl-D-alanyl-D-alanine + UDP + H(+). Its pathway is cell wall biogenesis; peptidoglycan biosynthesis. Cell wall formation. Catalyzes the transfer of a GlcNAc subunit on undecaprenyl-pyrophosphoryl-MurNAc-pentapeptide (lipid intermediate I) to form undecaprenyl-pyrophosphoryl-MurNAc-(pentapeptide)GlcNAc (lipid intermediate II). This is UDP-N-acetylglucosamine--N-acetylmuramyl-(pentapeptide) pyrophosphoryl-undecaprenol N-acetylglucosamine transferase from Chromobacterium violaceum (strain ATCC 12472 / DSM 30191 / JCM 1249 / CCUG 213 / NBRC 12614 / NCIMB 9131 / NCTC 9757 / MK).